Reading from the N-terminus, the 437-residue chain is Selenocysteine lyase (437 aa).

An N-acetylmethionine modification is found at Met1. The segment at 1 to 30 (MEAAGARNRDARSRAEKSPPESRKVYMDYN) is disordered. The segment covering 7-26 (RNRDARSRAEKSPPESRKVY) has biased composition (basic and acidic residues). At Lys252 the chain carries N6-(pyridoxal phosphate)lysine. Cys380 acts as the S-selanylcysteine intermediate in catalysis.

The protein belongs to the class-V pyridoxal-phosphate-dependent aminotransferase family. As to quaternary structure, homodimer. Pyridoxal 5'-phosphate serves as cofactor.

It is found in the cytoplasm. The protein localises to the cytosol. It carries out the reaction L-selenocysteine + AH2 = hydrogenselenide + L-alanine + A + H(+). Functionally, catalyzes the decomposition of L-selenocysteine to L-alanine and elemental selenium. In Bos taurus (Bovine), this protein is Selenocysteine lyase (SCLY).